The primary structure comprises 320 residues: Cytochrome f (320 aa).

The first 35 residues, 1–35 (MRNINTYDWMKKWMTRSISILVMIHMITRTSISNA), serve as a signal peptide directing secretion. The heme site is built by Tyr-36, Cys-56, Cys-59, and His-60. A helical membrane pass occupies residues 286–306 (VQGLLLLLASVILAQIFLVLK).

The protein belongs to the cytochrome f family. As to quaternary structure, the 4 large subunits of the cytochrome b6-f complex are cytochrome b6, subunit IV (17 kDa polypeptide, petD), cytochrome f and the Rieske protein, while the 4 small subunits are PetG, PetL, PetM and PetN. The complex functions as a dimer. It depends on heme as a cofactor.

Its subcellular location is the plastid. The protein localises to the chloroplast thylakoid membrane. Functionally, component of the cytochrome b6-f complex, which mediates electron transfer between photosystem II (PSII) and photosystem I (PSI), cyclic electron flow around PSI, and state transitions. This is Cytochrome f from Cycas taitungensis (Prince sago).